A 90-amino-acid polypeptide reads, in one-letter code: Cluster 41 protein AFLA_114800 (90 aa).

A helical membrane pass occupies residues 55 to 77; that stretch reads GLLLLCCFYPIGNLILLVRLSLV. N-linked (GlcNAc...) asparagine glycosylation is present at asparagine 80.

The protein localises to the membrane. Functionally, cluster 41 protein; part of the gene cluster 41 that mediates the biosynthesis of an extracellular and diffusible metabolite that is able to stimulate colony sclerotial production. The sequence is that of Cluster 41 protein AFLA_114800 from Aspergillus flavus (strain ATCC 200026 / FGSC A1120 / IAM 13836 / NRRL 3357 / JCM 12722 / SRRC 167).